Reading from the N-terminus, the 104-residue chain is Acetylcholine receptor subunit alpha (104 aa).

At 1–104 (NPPAIFKSYC…YFIVNVIIPC (104 aa)) the chain is on the extracellular side. Disulfide bonds link C10-C24 and C74-C75. A glycan (N-linked (GlcNAc...) asparagine) is linked at N23.

The protein belongs to the ligand-gated ion channel (TC 1.A.9) family. Acetylcholine receptor (TC 1.A.9.1) subfamily. Alpha-1/CHRNA1 sub-subfamily. One of the alpha chains that assemble within the acetylcholine receptor, a pentamer of two alpha chains, a beta, a delta, and a gamma or epsilon chains.

Its subcellular location is the postsynaptic cell membrane. The protein resides in the cell membrane. The enzyme catalyses K(+)(in) = K(+)(out). It catalyses the reaction Na(+)(in) = Na(+)(out). In terms of biological role, upon acetylcholine binding, the AChR responds by an extensive change in conformation that affects all subunits and leads to opening of an ion-conducting channel across the plasma membrane. This chain is Acetylcholine receptor subunit alpha (CHRNA1), found in Naja naja (Indian cobra).